A 181-amino-acid chain; its full sequence is NAD(P)H-quinone oxidoreductase subunit I, chloroplastic (181 aa).

4Fe-4S ferredoxin-type domains are found at residues 55–84 (GRIH…VDWE) and 95–124 (KNYS…MTEE). The [4Fe-4S] cluster site is built by cysteine 64, cysteine 67, cysteine 70, cysteine 74, cysteine 104, cysteine 107, cysteine 110, and cysteine 114.

This sequence belongs to the complex I 23 kDa subunit family. As to quaternary structure, NDH is composed of at least 16 different subunits, 5 of which are encoded in the nucleus. [4Fe-4S] cluster serves as cofactor.

It is found in the plastid. Its subcellular location is the chloroplast thylakoid membrane. The catalysed reaction is a plastoquinone + NADH + (n+1) H(+)(in) = a plastoquinol + NAD(+) + n H(+)(out). It carries out the reaction a plastoquinone + NADPH + (n+1) H(+)(in) = a plastoquinol + NADP(+) + n H(+)(out). Functionally, NDH shuttles electrons from NAD(P)H:plastoquinone, via FMN and iron-sulfur (Fe-S) centers, to quinones in the photosynthetic chain and possibly in a chloroplast respiratory chain. The immediate electron acceptor for the enzyme in this species is believed to be plastoquinone. Couples the redox reaction to proton translocation, and thus conserves the redox energy in a proton gradient. This is NAD(P)H-quinone oxidoreductase subunit I, chloroplastic from Angiopteris evecta (Mule's foot fern).